Consider the following 378-residue polypeptide: Quinolinate synthase (378 aa).

Iminosuccinate contacts are provided by His59 and Ser80. Cys125 is a binding site for [4Fe-4S] cluster. Iminosuccinate is bound by residues 151–153 (YAN) and Ser168. Cys212 contributes to the [4Fe-4S] cluster binding site. Iminosuccinate is bound by residues 238–240 (HPE) and Thr255. Cys309 is a [4Fe-4S] cluster binding site.

This sequence belongs to the quinolinate synthase family. Type 1 subfamily. Requires [4Fe-4S] cluster as cofactor.

It localises to the cytoplasm. The catalysed reaction is iminosuccinate + dihydroxyacetone phosphate = quinolinate + phosphate + 2 H2O + H(+). Its pathway is cofactor biosynthesis; NAD(+) biosynthesis; quinolinate from iminoaspartate: step 1/1. Catalyzes the condensation of iminoaspartate with dihydroxyacetone phosphate to form quinolinate. The chain is Quinolinate synthase from Burkholderia pseudomallei (strain 1106a).